Reading from the N-terminus, the 163-residue chain is E1B protein, small T-antigen (163 aa).

Belongs to the adenoviridae E1B 19 kDa protein family.

Its subcellular location is the host cell membrane. It localises to the host nucleus envelope. It is found in the host nucleus lamina. In terms of biological role, putative adenovirus Bcl-2 homolog that inhibits apoptosis induced by TNF or FAS pathways, as well as p53-mediated apoptosis. Without E1B 19K function, virus production is compromised because of premature death of host cell. Interacts with Bax protein in cell lysates. The chain is E1B protein, small T-antigen from Human adenovirus A serotype 12 (HAdV-12).